A 184-amino-acid polypeptide reads, in one-letter code: Ribosome-recycling factor (184 aa).

This sequence belongs to the RRF family.

The protein localises to the cytoplasm. Its function is as follows. Responsible for the release of ribosomes from messenger RNA at the termination of protein biosynthesis. May increase the efficiency of translation by recycling ribosomes from one round of translation to another. The chain is Ribosome-recycling factor from Psychrobacter arcticus (strain DSM 17307 / VKM B-2377 / 273-4).